Consider the following 63-residue polypeptide: Cytochrome c oxidase subunit 7C, mitochondrial (63 aa).

The N-terminal 16 residues, Met1–Arg16, are a transit peptide targeting the mitochondrion. At Ser17–Asn33 the chain is on the mitochondrial matrix side. Lys25 carries the N6-acetyllysine; alternate modification. At Lys25 the chain carries N6-succinyllysine; alternate. Residues Lys34–Leu60 traverse the membrane as a helical segment. Residues Leu61–Lys63 lie on the Mitochondrial intermembrane side of the membrane.

The protein belongs to the cytochrome c oxidase VIIc family. Component of the cytochrome c oxidase (complex IV, CIV), a multisubunit enzyme composed of 14 subunits. The complex is composed of a catalytic core of 3 subunits MT-CO1, MT-CO2 and MT-CO3, encoded in the mitochondrial DNA, and 11 supernumerary subunits COX4I, COX5A, COX5B, COX6A, COX6B, COX6C, COX7A, COX7B, COX7C, COX8 and NDUFA4, which are encoded in the nuclear genome. The complex exists as a monomer or a dimer and forms supercomplexes (SCs) in the inner mitochondrial membrane with NADH-ubiquinone oxidoreductase (complex I, CI) and ubiquinol-cytochrome c oxidoreductase (cytochrome b-c1 complex, complex III, CIII), resulting in different assemblies (supercomplex SCI(1)III(2)IV(1) and megacomplex MCI(2)III(2)IV(2)). Interacts with RAB5IF.

It localises to the mitochondrion inner membrane. Its pathway is energy metabolism; oxidative phosphorylation. Its function is as follows. Component of the cytochrome c oxidase, the last enzyme in the mitochondrial electron transport chain which drives oxidative phosphorylation. The respiratory chain contains 3 multisubunit complexes succinate dehydrogenase (complex II, CII), ubiquinol-cytochrome c oxidoreductase (cytochrome b-c1 complex, complex III, CIII) and cytochrome c oxidase (complex IV, CIV), that cooperate to transfer electrons derived from NADH and succinate to molecular oxygen, creating an electrochemical gradient over the inner membrane that drives transmembrane transport and the ATP synthase. Cytochrome c oxidase is the component of the respiratory chain that catalyzes the reduction of oxygen to water. Electrons originating from reduced cytochrome c in the intermembrane space (IMS) are transferred via the dinuclear copper A center (CU(A)) of subunit 2 and heme A of subunit 1 to the active site in subunit 1, a binuclear center (BNC) formed by heme A3 and copper B (CU(B)). The BNC reduces molecular oxygen to 2 water molecules using 4 electrons from cytochrome c in the IMS and 4 protons from the mitochondrial matrix. This Rattus norvegicus (Rat) protein is Cytochrome c oxidase subunit 7C, mitochondrial (Cox7c).